Consider the following 319-residue polypeptide: ATP-dependent 6-phosphofructokinase (319 aa).

G11 lines the ATP pocket. 21-25 (RAVVR) contributes to the ADP binding site. ATP is bound by residues 72-73 (RC) and 102-105 (GDGS). D103 is a binding site for Mg(2+). Substrate is bound at residue 125 to 127 (TID). D127 serves as the catalytic Proton acceptor. R154 provides a ligand contact to ADP. Residues R162 and 169–171 (MGR) contribute to the substrate site. Residues 185-187 (GAE), R211, and 213-215 (KKH) contribute to the ADP site. Residues E222, R243, and 249-252 (HVQR) contribute to the substrate site.

This sequence belongs to the phosphofructokinase type A (PFKA) family. ATP-dependent PFK group I subfamily. Prokaryotic clade 'B1' sub-subfamily. Homotetramer. Mg(2+) serves as cofactor.

Its subcellular location is the cytoplasm. The catalysed reaction is beta-D-fructose 6-phosphate + ATP = beta-D-fructose 1,6-bisphosphate + ADP + H(+). It participates in carbohydrate degradation; glycolysis; D-glyceraldehyde 3-phosphate and glycerone phosphate from D-glucose: step 3/4. With respect to regulation, allosterically activated by ADP and other diphosphonucleosides, and allosterically inhibited by phosphoenolpyruvate. Catalyzes the phosphorylation of D-fructose 6-phosphate to fructose 1,6-bisphosphate by ATP, the first committing step of glycolysis. The protein is ATP-dependent 6-phosphofructokinase of Geobacillus sp. (strain WCH70).